The chain runs to 168 residues: Nicotinamide-nucleotide adenylyltransferase (168 aa).

ATP is bound by residues arginine 8, phenylalanine 9, histidine 13, histidine 16, phenylalanine 119, arginine 121, tyrosine 124, glycine 126, threonine 127, and arginine 130.

This sequence belongs to the archaeal NMN adenylyltransferase family. As to quaternary structure, homohexamer existing as a trimer of dimers.

It is found in the cytoplasm. It carries out the reaction beta-nicotinamide D-ribonucleotide + ATP + H(+) = diphosphate + NAD(+). It functions in the pathway cofactor biosynthesis; NAD(+) biosynthesis; NAD(+) from nicotinamide D-ribonucleotide: step 1/1. Catalyzes the formation of NAD(+) from nicotinamide mononucleotide (NMN) and ATP. The polypeptide is Nicotinamide-nucleotide adenylyltransferase (Methanocaldococcus jannaschii (strain ATCC 43067 / DSM 2661 / JAL-1 / JCM 10045 / NBRC 100440) (Methanococcus jannaschii)).